Here is a 247-residue protein sequence, read N- to C-terminus: Cell division protein ZapD (247 aa).

It belongs to the ZapD family. As to quaternary structure, interacts with FtsZ.

The protein resides in the cytoplasm. Functionally, cell division factor that enhances FtsZ-ring assembly. Directly interacts with FtsZ and promotes bundling of FtsZ protofilaments, with a reduction in FtsZ GTPase activity. This is Cell division protein ZapD from Salmonella agona (strain SL483).